A 314-amino-acid chain; its full sequence is Short-chain dehydrogenase/reductase drtF (314 aa).

6 residues coordinate NADP(+): valine 26, lysine 50, aspartate 73, asparagine 100, tyrosine 185, and lysine 189. The active-site Proton acceptor is the tyrosine 185. Catalysis depends on lysine 189, which acts as the Lowers pKa of active site Tyr.

The protein belongs to the short-chain dehydrogenases/reductases (SDR) family.

It participates in secondary metabolite biosynthesis; terpenoid biosynthesis. In terms of biological role, short-chain dehydrogenase/reductase; part of the gene cluster that mediates the biosynthesis of various drimane-type sesquiterpene esters, compounds that exhibit diverse biological activities and are widely present in eukaryotes. The pathway begins with the synthesis of the backbone drimenol by the terpene cyclase drtB using farnesyl pyrophosphate (FPP) as substrate. The cytochrome P450 monooxygenase drtD is then responsible for the hydroxylations at C-6, C-9 and C-12, as well as the oxidation of hydroxyl groups at C-6 and C-11 to a ketone and an aldehyde, respectively. Then, the biosynthesis can go in two directions, either the hydroxylated drimenol is further hydroxylated at C-2 and C-3 by an enzyme(s) not associated with the drt cluster, or the FAD-binding oxidoreductase drtC further oxidizes C-11 or C-12 to form the butyrolactone ring. DrtB, drtD and drtC are solely responsible for the formation of the different drimane structures observed during drimane sesquiterpenes biosynthesis. The polyketide synthase drtA synthesizes different lengths (C6 and C8) of PKS chains, which are then oxidized to varying degrees by the short-chain dehydrogenase drtF. Finally, these PKS chains are transferred onto drimane sesquiterpenes by the acyltransferase drtE, forming the sesquiterpene esters. In addition to the different fatty acyl-CoA chains produced by drtA, drtE is also able to use cinnamoyl-CoA as a substrate. The protein is Short-chain dehydrogenase/reductase drtF of Aspergillus calidoustus.